The primary structure comprises 172 residues: Oleosin 18 kDa (172 aa).

N-acetylalanine is present on Ala2. The tract at residues Ala2–Thr38 is polar. The tract at residues Val39–Ala110 is hydrophobic. The next 3 membrane-spanning stretches (helical) occupy residues Leu42–Val62, Val70–Ala90, and Gly91–Asn111. Residues His147–Ser172 are disordered. Positions Thr158–Ser172 are enriched in gly residues.

This sequence belongs to the oleosin family.

The protein localises to the lipid droplet. Its subcellular location is the membrane. Its function is as follows. May have a structural role to stabilize the lipid body during desiccation of the seed by preventing coalescence of the oil. Probably interacts with both lipid and phospholipid moieties of lipid bodies. May also provide recognition signals for specific lipase anchorage in lipolysis during seedling growth. The polypeptide is Oleosin 18 kDa (OLE18) (Oryza sativa subsp. indica (Rice)).